The chain runs to 444 residues: MITIKKGLELPIAGGPEQVIHNGPAIRHVATLGEEYIGLRPTMKIKVGDKVQKGQVLFEDKKNLGVKYTALASGTILEINRGARRVLQSVVIAVEGDDSVAFAQYDADKLDTLDAQVVRDNLIDSGLWTALRTRPFSKVPAVDATAAGIFVTAIDTQPLAADPVVVIAQHKEDFANGLKVLARLTEGKVYLCKAQGADIPAANAQVQEFAGKHPAGLAGTHIHHVLPASATRTVWHIGYQDVIAFGQLFTQGVLNTERVVAIGGPKAKKPRLVRTVLGASMAELTADETVGDGVRVISGSVLSGRTAVGPQAYLGRYHQQVSVLEEGDEKELFGWAMPGVDKFSITRSFLGHLSPSRLFNMTTSTGGSDRAMVPIGNYERVMPLDILPTMLLRDLLSGDFDGAVRLGALELDEEDLALCTFVCPGKYDYGSYLRDCLDTIEREG.

The protein belongs to the NqrA family. Composed of six subunits; NqrA, NqrB, NqrC, NqrD, NqrE and NqrF.

It carries out the reaction a ubiquinone + n Na(+)(in) + NADH + H(+) = a ubiquinol + n Na(+)(out) + NAD(+). NQR complex catalyzes the reduction of ubiquinone-1 to ubiquinol by two successive reactions, coupled with the transport of Na(+) ions from the cytoplasm to the periplasm. NqrA to NqrE are probably involved in the second step, the conversion of ubisemiquinone to ubiquinol. This is Na(+)-translocating NADH-quinone reductase subunit A from Shewanella frigidimarina (strain NCIMB 400).